Here is a 693-residue protein sequence, read N- to C-terminus: Kinesin-like protein KIFC1 (693 aa).

Disordered stretches follow at residues 1–24 and 48–156; these read MRGR…VRTT and VKSS…KRPA. 2 stretches are compositionally biased toward low complexity: residues 49–59 and 127–138; these read KSSSRLPLPGS and QKPAPAAPAQKP. Residues Ser52 and Ser59 each carry the phosphoserine modification. Positions 165–334 form a coiled coil; the sequence is DLHEELKQYR…QELKGNIRVF (170 aa). Residues 330-683 enclose the Kinesin motor domain; that stretch reads NIRVFCRVRP…LRFASKVNQC (354 aa). Thr379 carries the post-translational modification Phosphothreonine. 430-437 is a binding site for ATP; it reads GQTGSGKT.

This sequence belongs to the TRAFAC class myosin-kinesin ATPase superfamily. Kinesin family. NCD subfamily. In terms of assembly, binds NUBP1 and NUBP2. Interacts with PPP1R42.

It is found in the nucleus. It localises to the cytoplasm. The protein localises to the cytoskeleton. Its subcellular location is the microtubule organizing center. The protein resides in the centrosome. It is found in the spindle. It localises to the early endosome. Minus end-directed microtubule-dependent motor required for bipolar spindle formation. May contribute to movement of early endocytic vesicles. Regulates cilium formation and structure. In Rattus norvegicus (Rat), this protein is Kinesin-like protein KIFC1.